The chain runs to 90 residues: MQQKLFIVTGHVQSVGFRFFTLQEAGKIGIKGYVKNRPEGSVEVVAVGSDAQMAAFRNWLQKGPPTSVVCNLIEQSYQGSEQFEHFEIRR.

The Acylphosphatase-like domain occupies 3–90 (QKLFIVTGHV…EQFEHFEIRR (88 aa)). Active-site residues include R18 and N36.

The protein belongs to the acylphosphatase family.

It carries out the reaction an acyl phosphate + H2O = a carboxylate + phosphate + H(+). This is Acylphosphatase (acyP) from Actinobacillus pleuropneumoniae serotype 5b (strain L20).